Reading from the N-terminus, the 37-residue chain is Cytochrome b6-f complex subunit 5 (37 aa).

A helical transmembrane segment spans residues 5 to 25 (LLSGIVLGLITVSALGLFVAA).

This sequence belongs to the PetG family. The 4 large subunits of the cytochrome b6-f complex are cytochrome b6, subunit IV (17 kDa polypeptide, PetD), cytochrome f and the Rieske protein, while the 4 small subunits are PetG, PetL, PetM and PetN. The complex functions as a dimer.

The protein localises to the plastid. It is found in the chloroplast thylakoid membrane. Component of the cytochrome b6-f complex, which mediates electron transfer between photosystem II (PSII) and photosystem I (PSI), cyclic electron flow around PSI, and state transitions. PetG is required for either the stability or assembly of the cytochrome b6-f complex. This Phaeodactylum tricornutum (strain CCAP 1055/1) protein is Cytochrome b6-f complex subunit 5.